Here is a 565-residue protein sequence, read N- to C-terminus: Sulfite reductase [NADPH] hemoprotein beta-component (565 aa).

Residues Cys429, Cys435, Cys474, and Cys478 each contribute to the [4Fe-4S] cluster site. Position 478 (Cys478) interacts with siroheme.

Belongs to the nitrite and sulfite reductase 4Fe-4S domain family. Alpha(8)-beta(8). The alpha component is a flavoprotein, the beta component is a hemoprotein. Siroheme is required as a cofactor. Requires [4Fe-4S] cluster as cofactor.

It catalyses the reaction hydrogen sulfide + 3 NADP(+) + 3 H2O = sulfite + 3 NADPH + 4 H(+). It participates in sulfur metabolism; hydrogen sulfide biosynthesis; hydrogen sulfide from sulfite (NADPH route): step 1/1. In terms of biological role, component of the sulfite reductase complex that catalyzes the 6-electron reduction of sulfite to sulfide. This is one of several activities required for the biosynthesis of L-cysteine from sulfate. The polypeptide is Sulfite reductase [NADPH] hemoprotein beta-component (Shewanella oneidensis (strain ATCC 700550 / JCM 31522 / CIP 106686 / LMG 19005 / NCIMB 14063 / MR-1)).